Reading from the N-terminus, the 162-residue chain is Putative 4-hydroxy-4-methyl-2-oxoglutarate aldolase (162 aa).

Residues 75 to 78 and arginine 97 each bind substrate; that span reads GDML. Aspartate 98 contributes to the a divalent metal cation binding site.

This sequence belongs to the class II aldolase/RraA-like family. Homotrimer. The cofactor is a divalent metal cation.

It catalyses the reaction 4-hydroxy-4-methyl-2-oxoglutarate = 2 pyruvate. The enzyme catalyses oxaloacetate + H(+) = pyruvate + CO2. Functionally, catalyzes the aldol cleavage of 4-hydroxy-4-methyl-2-oxoglutarate (HMG) into 2 molecules of pyruvate. Also contains a secondary oxaloacetate (OAA) decarboxylase activity due to the common pyruvate enolate transition state formed following C-C bond cleavage in the retro-aldol and decarboxylation reactions. The sequence is that of Putative 4-hydroxy-4-methyl-2-oxoglutarate aldolase from Stutzerimonas stutzeri (strain A1501) (Pseudomonas stutzeri).